The sequence spans 138 residues: ATP synthase epsilon chain, chloroplastic (138 aa).

Belongs to the ATPase epsilon chain family. As to quaternary structure, F-type ATPases have 2 components, CF(1) - the catalytic core - and CF(0) - the membrane proton channel. CF(1) has five subunits: alpha(3), beta(3), gamma(1), delta(1), epsilon(1). CF(0) has three main subunits: a, b and c.

It is found in the plastid. It localises to the chloroplast thylakoid membrane. Its function is as follows. Produces ATP from ADP in the presence of a proton gradient across the membrane. This is ATP synthase epsilon chain, chloroplastic from Galdieria sulphuraria (Red alga).